Here is a 281-residue protein sequence, read N- to C-terminus: Lectin (281 aa).

Positions 1–26 (MATYKLCSVLALSLTLFLLILNKVNS) are cleaved as a signal peptide. Asparagine 43 and asparagine 139 each carry an N-linked (GlcNAc...) asparagine glycan. Residues 269 to 281 (AVIPTSNHNTFAI) constitute a propeptide that is removed on maturation.

Belongs to the leguminous lectin family. In terms of assembly, homodimer. Post-translationally, a minor C-terminal proteolytic processing site is observed at position 268.

In terms of biological role, galactose and N-acetyllactosamine specific lectin. Binds to the H-2 blood type determinant fucosyl-N-acetyllactosamine. The chain is Lectin from Erythrina corallodendron (Coral tree).